The following is a 104-amino-acid chain: Small ribosomal subunit protein uS10 (104 aa).

The protein belongs to the universal ribosomal protein uS10 family. Part of the 30S ribosomal subunit.

Its function is as follows. Involved in the binding of tRNA to the ribosomes. The chain is Small ribosomal subunit protein uS10 from Nitrosococcus oceani (strain ATCC 19707 / BCRC 17464 / JCM 30415 / NCIMB 11848 / C-107).